Reading from the N-terminus, the 415-residue chain is U-box domain-containing protein 29 (415 aa).

Residues 11–85 form the U-box domain; sequence TVPSFFKCPI…NIWSDSIGRR (75 aa). 2 ARM repeats span residues 221 to 263 and 265 to 307; these read KSKL…TISK and KRVR…TLSS.

In terms of assembly, binds to SD129 and SD25.

It carries out the reaction S-ubiquitinyl-[E2 ubiquitin-conjugating enzyme]-L-cysteine + [acceptor protein]-L-lysine = [E2 ubiquitin-conjugating enzyme]-L-cysteine + N(6)-ubiquitinyl-[acceptor protein]-L-lysine.. It functions in the pathway protein modification; protein ubiquitination. In terms of biological role, functions as an E3 ubiquitin ligase. This is U-box domain-containing protein 29 (PUB29) from Arabidopsis thaliana (Mouse-ear cress).